We begin with the raw amino-acid sequence, 193 residues long: Large ribosomal subunit protein uL5 (193 aa).

This sequence belongs to the universal ribosomal protein uL5 family. Part of the 50S ribosomal subunit; part of the 5S rRNA/L5/L18/L25 subcomplex. Contacts the 5S rRNA and the P site tRNA. Forms a bridge to the 30S subunit in the 70S ribosome.

This is one of the proteins that bind and probably mediate the attachment of the 5S RNA into the large ribosomal subunit, where it forms part of the central protuberance. In the 70S ribosome it contacts protein S13 of the 30S subunit (bridge B1b), connecting the 2 subunits; this bridge is implicated in subunit movement. Contacts the P site tRNA; the 5S rRNA and some of its associated proteins might help stabilize positioning of ribosome-bound tRNAs. The polypeptide is Large ribosomal subunit protein uL5 (Corynebacterium urealyticum (strain ATCC 43042 / DSM 7109)).